The following is a 408-amino-acid chain: Argininosuccinate synthase (408 aa).

Residues 10 to 18 (AYSGGLDTS) and alanine 37 contribute to the ATP site. Residues tyrosine 90 and serine 95 each coordinate L-citrulline. ATP is bound at residue glycine 120. L-aspartate-binding residues include threonine 122, asparagine 126, and aspartate 127. Asparagine 126 provides a ligand contact to L-citrulline. Residues arginine 130, serine 181, serine 190, glutamate 266, and tyrosine 278 each contribute to the L-citrulline site.

Belongs to the argininosuccinate synthase family. Type 1 subfamily. Homotetramer.

The protein localises to the cytoplasm. It carries out the reaction L-citrulline + L-aspartate + ATP = 2-(N(omega)-L-arginino)succinate + AMP + diphosphate + H(+). It functions in the pathway amino-acid biosynthesis; L-arginine biosynthesis; L-arginine from L-ornithine and carbamoyl phosphate: step 2/3. This chain is Argininosuccinate synthase, found in Laribacter hongkongensis (strain HLHK9).